The chain runs to 312 residues: Testis-expressed protein 13B (312 aa).

It belongs to the TEX13 family. Testis specific.

This Homo sapiens (Human) protein is Testis-expressed protein 13B (TEX13B).